Reading from the N-terminus, the 269-residue chain is Shikimate dehydrogenase (NADP(+)) (269 aa).

Residues 19-21 (SLS) and Thr66 each bind shikimate. The active-site Proton acceptor is Lys70. Asp82 is an NADP(+) binding site. Residues Asn91 and Asp106 each coordinate shikimate. NADP(+) is bound by residues 130–134 (GAGGA), 153–158 (NRTKEK), and Ile214. Tyr216 is a shikimate binding site. Gly235 contacts NADP(+). Gln242 contributes to the shikimate binding site.

This sequence belongs to the shikimate dehydrogenase family. In terms of assembly, homodimer.

The catalysed reaction is shikimate + NADP(+) = 3-dehydroshikimate + NADPH + H(+). It participates in metabolic intermediate biosynthesis; chorismate biosynthesis; chorismate from D-erythrose 4-phosphate and phosphoenolpyruvate: step 4/7. Its function is as follows. Involved in the biosynthesis of the chorismate, which leads to the biosynthesis of aromatic amino acids. Catalyzes the reversible NADPH linked reduction of 3-dehydroshikimate (DHSA) to yield shikimate (SA). This chain is Shikimate dehydrogenase (NADP(+)), found in Aquifex aeolicus (strain VF5).